The following is a 2692-amino-acid chain: Thyroglobulin (2692 aa).

A signal peptide spans Met-1–Ala-19. Tyr-24 bears the Iodotyrosine; alternate mark. Tyr-24 carries the sulfotyrosine; alternate modification. Tyr-24 carries the post-translational modification Thyroxine; alternate. Tyr-24 is modified (triiodothyronine; alternate). Thyroglobulin type-1 domains follow at residues Leu-31–Cys-92, Leu-93–Cys-160, and Pro-161–Thr-248. 8 disulfide bridges follow: Cys-34–Cys-52, Cys-63–Cys-70, Cys-72–Cys-92, Cys-96–Cys-120, Cys-131–Cys-138, Cys-140–Cys-160, Cys-164–Cys-183, and Cys-194–Cys-235. At Tyr-108 the chain carries Iodotyrosine. Asn-110 carries an N-linked (GlcNAc...) asparagine glycan. Iodotyrosine; alternate is present on Tyr-149. Tyr-149 is modified (diiodotyrosine; alternate). N-linked (GlcNAc...) asparagine glycosylation occurs at Asn-198. An iodotyrosine mark is found at Tyr-234 and Tyr-258. Residues Pro-298–Cys-358 form the Thyroglobulin type-1 4 domain. 9 cysteine pairs are disulfide-bonded: Cys-301–Cys-319, Cys-330–Cys-336, Cys-338–Cys-358, Cys-364–Cys-621, Cys-408–Cys-609, Cys-632–Cys-637, Cys-639–Cys-659, Cys-663–Cys-688, and Cys-699–Cys-704. N-linked (GlcNAc...) asparagine glycosylation is found at Asn-485, Asn-497, and Asn-546. Thyroglobulin type-1 domains lie at Ser-606–Cys-659, Pro-660–Cys-727, and Pro-728–Cys-923. Tyr-705 carries the iodotyrosine; alternate modification. Position 705 is a thyroxine; alternate (Tyr-705). The residue at position 705 (Tyr-705) is a Triiodothyronine; alternate. Tyr-705 is modified (diiodotyrosine; alternate). 13 disulfide bridges follow: Cys-706–Cys-727, Cys-731–Cys-764, Cys-775–Cys-900, Cys-902–Cys-923, Cys-927–Cys-1033, Cys-1044–Cys-1051, Cys-1053–Cys-1079, Cys-1128–Cys-1147, Cys-1151–Cys-1171, Cys-1183–Cys-1190, Cys-1192–Cys-1212, Cys-1237–Cys-1287, and Cys-1262–Cys-1278. The N-linked (GlcNAc...) asparagine glycan is linked to Asn-749. An Iodotyrosine modification is found at Tyr-786. The N-linked (GlcNAc...) asparagine glycan is linked to Asn-855. Tyr-868 is modified (iodotyrosine; alternate). Tyr-868 bears the Diiodotyrosine; alternate mark. Diiodotyrosine is present on Tyr-885. An N-linked (GlcNAc...) asparagine glycan is attached at Asn-949. Tyr-994 is modified (iodotyrosine; alternate). Tyr-994 is subject to Diiodotyrosine; alternate. Thyroglobulin type-1 domains lie at Ser-1021–Cys-1079, Leu-1088–Cys-1147, and Pro-1148–Cys-1212. Asn-1142 is a glycosylation site (N-linked (GlcNAc...) asparagine). Tyr-1241 carries the post-translational modification Iodotyrosine. Tyr-1241 is subject to Thyroxine. 2 N-linked (GlcNAc...) asparagine glycosylation sites follow: Asn-1296 and Asn-1384. Cystine bridges form between Cys-1372-Cys-1392, Cys-1395-Cys-1406, Cys-1409-Cys-1423, Cys-1426-Cys-1443, Cys-1447-Cys-1456, Cys-1476-Cys-1498, Cys-1535-Cys-1559, Cys-1539-Cys-1545, Cys-1571-Cys-1594, Cys-1656-Cys-1681, Cys-1660-Cys-1666, Cys-1665-Cys-1766, and Cys-1692-Cys-1709. Type II repeat units lie at residues Pro-1389–Gln-1402, Glu-1403–Gly-1419, and Ser-1420–Gly-1436. At Tyr-1400 the chain carries Iodotyrosine; alternate. The residue at position 1400 (Tyr-1400) is a Diiodotyrosine; alternate. Residues Val-1444–Cys-1498 enclose the Thyroglobulin type-1 11 domain. A Type IIIA repeat occupies Cys-1535–Phe-1655. Residues Cys-1656–Trp-1823 form a Type IIIB repeat. Asn-1800 carries N-linked (GlcNAc...) asparagine glycosylation. 10 disulfide bridges follow: Cys-1824–Cys-1850, Cys-1828–Cys-1835, Cys-1859–Cys-1870, Cys-1927–Cys-1955, Cys-1931–Cys-1937, Cys-1936–Cys-2007, Cys-1966–Cys-1979, Cys-2061–Cys-2085, Cys-2065–Cys-2071, and Cys-2094–Cys-2103. Residues Cys-1824–Glu-1926 form a Type IIIA repeat. Residues Cys-1927–Arg-2060 form a Type IIIB repeat. A glycan (N-linked (GlcNAc...) asparagine) is linked at Asn-1944. The Type IIIA repeat unit spans residues Cys-2061–Pro-2118. An Iodotyrosine modification is found at Tyr-2115. Residues Asp-2119–Lys-2692 are cholinesterase-like (ChEL). Residues Asn-2181 and Asn-2226 are each glycosylated (N-linked (GlcNAc...) asparagine). Position 2467 is a thyroxine (Tyr-2467). Tyr-2500 carries the iodotyrosine; alternate modification. Position 2500 is a thyroxine; alternate (Tyr-2500). The residue at position 2500 (Tyr-2500) is a Triiodothyronine; alternate. At Tyr-2500 the chain carries Diiodotyrosine; alternate. An iodotyrosine mark is found at Tyr-2514 and Tyr-2544. A disulfide bond links Cys-2518 and Cys-2642. Tyr-2624 carries the diiodotyrosine modification. The segment covering Glu-2658–Asp-2671 has biased composition (acidic residues). The tract at residues Glu-2658–Lys-2692 is disordered. Residue Tyr-2690 is modified to Iodotyrosine; alternate. Tyr-2690 is subject to Thyroxine; alternate. Tyr-2690 carries the triiodothyronine; alternate modification. Tyr-2690 bears the Diiodotyrosine; alternate mark.

The protein belongs to the type-B carboxylesterase/lipase family. In terms of assembly, monomer. Homodimer (via ChEL region); occurs in the endoplasmic reticulum and is required for export to the Golgi apparatus. Homooligomer; disulfide-linked; stored in this form in the thyroid follicle lumen. In terms of processing, iodinated on tyrosine residues by TPO. There are 4 pairs of iodinated tyrosines used for coupling: acceptor Tyr-24 is coupled to donor Tyr-149 or Tyr-234, acceptor Tyr-2500 is coupled to donor Tyr-2467, acceptor Tyr-2690 in monomer 1 is coupled to donor Tyr-2690 in monomer 2 and acceptor Tyr-1241 in monomer 1 is coupled to donor Tyr-108 in monomer 2. Post-translationally, sulfated tyrosines are desulfated during iodination. Undergoes sequential proteolysis by cathepsins to release thyroxine (T4) and triiodothyronine (T3) hormones. In the thyroid follicle lumen, cross-linked TG (storage form) is solubilized by limited proteolysis mediated by cathepsins CTSB and/or CTSL. Partially cleaved TG is further processed by CTSK/cathepsin K and/or CTSL resulting in the release of T4. Following endocytosis, further processing occurs leading to the release of T3 and more T4 hormones. Expressed in thyroid epithelial cells.

The protein resides in the secreted. Acts as a substrate for the production of iodinated thyroid hormones thyroxine (T4) and triiodothyronine (T3). The synthesis of T3 and T4 involves iodination of selected tyrosine residues of TG/thyroglobulin followed by their oxidative coupling. Following TG re-internalization and lysosomal-mediated proteolysis, T3 and T4 are released from the polypeptide backbone leading to their secretion into the bloodstream. One dimer produces 7 thyroid hormone molecules. This Sus scrofa (Pig) protein is Thyroglobulin.